The chain runs to 689 residues: Glycine--tRNA ligase beta subunit (689 aa).

The protein belongs to the class-II aminoacyl-tRNA synthetase family. As to quaternary structure, tetramer of two alpha and two beta subunits.

Its subcellular location is the cytoplasm. It carries out the reaction tRNA(Gly) + glycine + ATP = glycyl-tRNA(Gly) + AMP + diphosphate. The protein is Glycine--tRNA ligase beta subunit of Hamiltonella defensa subsp. Acyrthosiphon pisum (strain 5AT).